Here is a 396-residue protein sequence, read N- to C-terminus: S-arrestin (396 aa).

Belongs to the arrestin family.

Arrestin is one of the major proteins of the ros (retinal rod outer segments); it binds to photoactivated-phosphorylated rhodopsin, thereby apparently preventing the transducin-mediated activation of phosphodiesterase. In Lithobates pipiens (Northern leopard frog), this protein is S-arrestin.